The primary structure comprises 362 residues: 3-dehydroquinate synthase (362 aa).

Residues 71–76, 105–109, 129–130, K142, K151, and 169–172 contribute to the NAD(+) site; these read DGEQYK, GVVGD, TT, and CLKT. Zn(2+) is bound by residues E184, H247, and H264.

The protein belongs to the sugar phosphate cyclases superfamily. Dehydroquinate synthase family. Co(2+) is required as a cofactor. It depends on Zn(2+) as a cofactor. NAD(+) serves as cofactor.

Its subcellular location is the cytoplasm. It catalyses the reaction 7-phospho-2-dehydro-3-deoxy-D-arabino-heptonate = 3-dehydroquinate + phosphate. It functions in the pathway metabolic intermediate biosynthesis; chorismate biosynthesis; chorismate from D-erythrose 4-phosphate and phosphoenolpyruvate: step 2/7. Its function is as follows. Catalyzes the conversion of 3-deoxy-D-arabino-heptulosonate 7-phosphate (DAHP) to dehydroquinate (DHQ). The chain is 3-dehydroquinate synthase from Escherichia coli O6:K15:H31 (strain 536 / UPEC).